The primary structure comprises 20 residues: Isocitrate dehydrogenase [NADP] (20 aa).

Belongs to the isocitrate and isopropylmalate dehydrogenases family. Mn(2+) is required as a cofactor. It depends on Mg(2+) as a cofactor.

It is found in the cytoplasm. The enzyme catalyses D-threo-isocitrate + NADP(+) = 2-oxoglutarate + CO2 + NADPH. The sequence is that of Isocitrate dehydrogenase [NADP] from Naegleria fowleri (Brain eating amoeba).